A 174-amino-acid polypeptide reads, in one-letter code: Sarcoplasmic calcium-binding protein (174 aa).

The residue at position 1 (S1) is an N-acetylserine. 4 EF-hand domains span residues 3–38, 55–90, 91–126, and 125–160; these read LWVQKMKTYFNRIDFDKDGAITRKDFESMATRFAKE, GVWDKFLANVAGGKGIDQATFISSMKEKVKDPNAKA, VVEGPLPLFFRAVDTNEDNMISRDEYGIFFNMLGLN, and LNPDMAPASFDAIDTNNDGLLSQEEFVTAGSDFFIN. Residues D16, D18, D20, and D27 each coordinate Ca(2+). Residues D104, N106, D108, M110, E115, D138, N140, D142, and E149 each coordinate Ca(2+).

Like parvalbumins, SCPs seem to be more abundant in fast contracting muscles, but no functional relationship can be established from this distribution. The chain is Sarcoplasmic calcium-binding protein from Perinereis vancaurica tetradentata (Sandworm).